Here is a 486-residue protein sequence, read N- to C-terminus: MPVSPAFNPQDALRFLPEIILTVMGTLLMVLDPVIHKRSSNAFGHISLIALVMALGASIYAYGIAGPAFGGMLMVDGFATFFRVVVITVGILTVFPSYRFLARQDAETSEYHALLLFSIAGQCLMAASNDLIMVFIGLEISSIASYVLAGYLRDDKRANEAALKYFLLGSFATGFFLYGVAWIYGLTRSVNLSVVRGVFQHQPVDPTFVGIAAALMFVGLAFKVSAAPFQIWAPDVYQGAPTPVSAFLSAGPKAAAFAIFLRIFMTAFEPISDKWQPLVWTAALASMCIGNFAAILQTNIKRMLAYSSIAHAGYVLVALTAHSETGVAAAMFYLAGYAFMNVGAFAAVSVLTGKGERYQNIDDFKGMGRKQPLAAAMFTIFLLSLLGVPLTGGFFGKFYIFKAALDSHLIWLTVLGLLNSAVGAYYYLRILVVMYMYEPGEAADAAEPLAPSLAFALILPALGTLALGIFPGWVLEFATKSAANLK.

A run of 14 helical transmembrane segments spans residues 15 to 35 (FLPE…DPVI), 46 to 66 (ISLI…GIAG), 72 to 92 (MLMV…VGIL), 111 to 128 (YHAL…MAAS), 131 to 151 (LIMV…LAGY), 166 to 186 (FLLG…IYGL), 208 to 228 (FVGI…SAAP), 241 to 261 (PTPV…AIFL), 276 to 296 (QPLV…AAIL), 303 to 323 (MLAY…TAHS), 331 to 351 (MFYL…VSVL), 375 to 395 (AAMF…GGFF), 410 to 432 (IWLT…RILV), and 455 to 475 (FALI…GWVL).

The protein belongs to the complex I subunit 2 family. In terms of assembly, NDH-1 is composed of 14 different subunits. Subunits NuoA, H, J, K, L, M, N constitute the membrane sector of the complex.

The protein resides in the cell inner membrane. The catalysed reaction is a quinone + NADH + 5 H(+)(in) = a quinol + NAD(+) + 4 H(+)(out). Its function is as follows. NDH-1 shuttles electrons from NADH, via FMN and iron-sulfur (Fe-S) centers, to quinones in the respiratory chain. The immediate electron acceptor for the enzyme in this species is believed to be ubiquinone. Couples the redox reaction to proton translocation (for every two electrons transferred, four hydrogen ions are translocated across the cytoplasmic membrane), and thus conserves the redox energy in a proton gradient. This Solibacter usitatus (strain Ellin6076) protein is NADH-quinone oxidoreductase subunit N 1.